The primary structure comprises 124 residues: UPF0102 protein PP_1324 (124 aa).

This sequence belongs to the UPF0102 family.

This Pseudomonas putida (strain ATCC 47054 / DSM 6125 / CFBP 8728 / NCIMB 11950 / KT2440) protein is UPF0102 protein PP_1324.